The sequence spans 463 residues: Glutamate--tRNA ligase (463 aa).

The 'HIGH' region signature appears at 9-19 (PSPTGYLHVGG). Residues 115–129 (AGEKPRYDGTWRPEA) are compositionally biased toward basic and acidic residues. The interval 115-136 (AGEKPRYDGTWRPEAGKTLPAI) is disordered. The short motif at 241–245 (KLSKR) is the 'KMSKS' region element. Residue Lys244 participates in ATP binding.

The protein belongs to the class-I aminoacyl-tRNA synthetase family. Glutamate--tRNA ligase type 1 subfamily. Monomer.

The protein localises to the cytoplasm. It catalyses the reaction tRNA(Glu) + L-glutamate + ATP = L-glutamyl-tRNA(Glu) + AMP + diphosphate. Its function is as follows. Catalyzes the attachment of glutamate to tRNA(Glu) in a two-step reaction: glutamate is first activated by ATP to form Glu-AMP and then transferred to the acceptor end of tRNA(Glu). The protein is Glutamate--tRNA ligase of Janthinobacterium sp. (strain Marseille) (Minibacterium massiliensis).